Here is a 147-residue protein sequence, read N- to C-terminus: Small ribosomal subunit protein uS9 (147 aa).

The segment at Lys-128–Arg-147 is disordered.

Belongs to the universal ribosomal protein uS9 family.

The sequence is that of Small ribosomal subunit protein uS9 (rpsI) from Aquifex aeolicus (strain VF5).